A 235-amino-acid polypeptide reads, in one-letter code: Phosphoribosylaminoimidazole-succinocarboxamide synthase (235 aa).

The protein belongs to the SAICAR synthetase family.

It carries out the reaction 5-amino-1-(5-phospho-D-ribosyl)imidazole-4-carboxylate + L-aspartate + ATP = (2S)-2-[5-amino-1-(5-phospho-beta-D-ribosyl)imidazole-4-carboxamido]succinate + ADP + phosphate + 2 H(+). It functions in the pathway purine metabolism; IMP biosynthesis via de novo pathway; 5-amino-1-(5-phospho-D-ribosyl)imidazole-4-carboxamide from 5-amino-1-(5-phospho-D-ribosyl)imidazole-4-carboxylate: step 1/2. This is Phosphoribosylaminoimidazole-succinocarboxamide synthase from Streptococcus agalactiae serotype Ia (strain ATCC 27591 / A909 / CDC SS700).